The chain runs to 551 residues: Seventh homolog of septin 1 (551 aa).

An N-acetylserine modification is found at serine 2. Residues 20–339 (RGITYTMLLC…ENYRSEKLSS (320 aa)) enclose the Septin-type G domain. Residues 30-37 (GPAGTGKT) form a G1 motif region. GTP is bound by residues 30-37 (GPAGTGKT), glycine 138, 218-226 (RADSFTKEE), and arginine 288. A G3 motif region spans residues 135-138 (MTHG). Positions 217-220 (TRAD) are G4 motif. Positions 381 to 417 (NLRADTPRNQVSGNFKENEYEDNGEHDSAENEQEMSP) are disordered. Tyrosine 400 carries the post-translational modification Phosphotyrosine. A phosphoserine mark is found at serine 408 and serine 416. Positions 418-518 (VRQLGREIKQ…KLINQNKLNG (101 aa)) form a coiled coil. Glycyl lysine isopeptide (Lys-Gly) (interchain with G-Cter in SUMO) cross-links involve residues lysine 426 and lysine 437. Phosphoserine is present on residues serine 447, serine 460, serine 519, serine 520, serine 522, and serine 525. A disordered region spans residues 515–551 (KLNGSSSSINSLQQSTRSQIKKNDTYTDLASIASGRD). Over residues 519-532 (SSSSINSLQQSTRS) the composition is skewed to low complexity. Threonine 539 is modified (phosphothreonine). Serine 545 and serine 548 each carry phosphoserine.

This sequence belongs to the TRAFAC class TrmE-Era-EngA-EngB-Septin-like GTPase superfamily. Septin GTPase family. As to quaternary structure, component of the septin complex which consists of CDC3, CDC10, CDC11, CDC12 and probably SHS1 and rearranges to a cortical collar of highly ordered filaments at the mother-bud-neck. A complex formed by CDC3, CDC10, CDC11 and CDC12 is capable of forming long filaments in vitro and the components seem to be present in a 2:2:2:2 arrangement in vivo. The filaments are proposed to be formed by the end-to-end polymerization of CDC3-CDC12-CDC11 complexes with CDC10 serving as a bridge to bundle the polymers into paired filaments. Component of the GIN4 complex composed of at least BNI5, CDC3, CDC10, CDC11, CDC12, GIN4, NAP1 and SHS1. Self-associates. Interacts with CDC11 and SPA2. Post-translationally, phosphorylated by GIN4 and CLA4. Phosphorylation state is essential for septin ring dynamics during telophase. In terms of processing, sumoylated during mitosis on the mother cell side of the bud neck. Sumoylation probably plays a central role in regulating septin ring disassembly during the cell cycle.

It localises to the membrane. The protein localises to the bud neck. Its function is as follows. Septins are GTPases involved in cytokinesis that assemble early in the cell cycle as a patch at the incipient bud site and form a ring approximately 15 minutes before bud emergence, which transforms into an hour-glass shaped collar of cortical filaments that spans both sides of the mother-bud neck. This collar persists until just before cytokinesis, when it splits into two rings that occupy opposite sides of the neck. The septins at the bud neck serve as a structural scaffold that recruits different components involved in diverse processes at specific stages during the cell cycle. Many proteins bind asymmetrically to the septin collar. The septin assembly is regulated by protein kinases GIN4 and/or CLA4. May act by recruiting MYO1 and HOF1, a protein involved in septation, to the site of cleavage. Septins are also involved in cell morphogenesis, bud site selection, chitin deposition, cell cycle regulation, cell compartmentalization and spore wall formation. CDCd11 with SHS1 11 are involved in the recruitment of BNI5 and thereby ensure efficient localization at the bud neck of MYO1, the type II myosin of the actomyosin contractile ring. In Saccharomyces cerevisiae (strain ATCC 204508 / S288c) (Baker's yeast), this protein is Seventh homolog of septin 1.